The following is a 200-amino-acid chain: Guanylate kinase (200 aa).

Residues 6–184 (GLLIVLSGPS…AVDKLKSILL (179 aa)) enclose the Guanylate kinase-like domain. Residue 13 to 20 (GPSGAGKG) coordinates ATP.

Belongs to the guanylate kinase family.

Its subcellular location is the cytoplasm. The catalysed reaction is GMP + ATP = GDP + ADP. In terms of biological role, essential for recycling GMP and indirectly, cGMP. This chain is Guanylate kinase, found in Desulfitobacterium hafniense (strain Y51).